Consider the following 285-residue polypeptide: MDMTLPIALLIDLMFGEPPAIIHPVVGFGKVIEFFDNKYRRRSPYLDFLVGAISSLVVIGLAFILSHLPNFLPNPFNLILSIYLLKSSFAIRSLHDHVKRTITPDLEEKRRAVSMIVSRDTKSLDEPHLNSAAIESLSENINDSVIAPLFYYLIFGLPGAVVYRAVNTLDAMIGYRNEKYEYFGKFAARLDDLLNFVPARITVLLFLSLGGRKVIRYYRMAKYKINSDKPIAAMSAVLGVWLEKPNYYKFPGRRPENEDIKRALKVYWIIVVEFLLIVAIILYGG.

A run of 4 helical transmembrane segments spans residues 10–32, 45–67, 145–167, and 266–283; these read LIDL…GKVI, YLDF…ILSH, VIAP…RAVN, and VYWI…IILY.

This sequence belongs to the CobD/CbiB family.

It is found in the cell membrane. Its pathway is cofactor biosynthesis; adenosylcobalamin biosynthesis. Functionally, converts cobyric acid to cobinamide by the addition of aminopropanol on the F carboxylic group. This chain is Probable cobalamin biosynthesis protein CobD, found in Pyrococcus furiosus (strain ATCC 43587 / DSM 3638 / JCM 8422 / Vc1).